We begin with the raw amino-acid sequence, 450 residues long: Putative receptor-like protein kinase At1g72540 (450 aa).

Phosphothreonine is present on Thr73. In terms of domain architecture, Protein kinase spans 84 to 365; sequence FSKYNFLGEG…TVVKTLEPIL (282 aa). Residues 90–98 and Lys119 each bind ATP; that span reads LGEGGFGEV. Residue Tyr164 is modified to Phosphotyrosine. Asp214 (proton acceptor) is an active-site residue. Phosphoserine is present on Ser218. Phosphothreonine is present on Thr254. Tyr262 bears the Phosphotyrosine mark.

This sequence belongs to the protein kinase superfamily. Ser/Thr protein kinase family.

The enzyme catalyses L-seryl-[protein] + ATP = O-phospho-L-seryl-[protein] + ADP + H(+). It carries out the reaction L-threonyl-[protein] + ATP = O-phospho-L-threonyl-[protein] + ADP + H(+). In Arabidopsis thaliana (Mouse-ear cress), this protein is Putative receptor-like protein kinase At1g72540.